The sequence spans 330 residues: MGGLTISDLVVEYSSGGYAVRPIDGLSLDVAPGSLVILLGPSGCGKTTLLSCLGGILRPKSGSIKFDDVDITTLEGAALAKYRRDKVGIVFQAFNLVSSLTALENVMVPLRAAGVSRAAARKRAEDLLIRVNLGERMKHRPGDMSGGQQQRVAVARAIALDPQLILADEPTAHLDFIQVEEVLRLIRSLAQGDRVVVVATHDSRMLPLADRVLELMPAQVSPNQPPETVHVKAGEVLFEQSTMGDLIYVVSEGEFEIVRELADGGEELVKTAAPGDYFGEIGVLFHLPRSATVRARSDATAVGYTAQAFRERLGVTRVADLIEHRELASE.

The ABC transporter domain occupies 4–242 (LTISDLVVEY…AGEVLFEQST (239 aa)). 40 to 47 (GPSGCGKT) contributes to the ATP binding site. 210 to 330 (DRVLELMPAQ…LIEHRELASE (121 aa)) serves as a coordination point for a nucleoside 3',5'-cyclic phosphate.

Belongs to the ABC transporter superfamily.

This is an uncharacterized protein from Mycobacterium bovis (strain ATCC BAA-935 / AF2122/97).